We begin with the raw amino-acid sequence, 348 residues long: Heptaprenyl diphosphate synthase component 2 (348 aa).

Residues K73, R76, and H105 each coordinate isopentenyl diphosphate. Mg(2+) is bound by residues D112 and D116. R121 is an all-trans-hexaprenyl diphosphate binding site. R122 contributes to the isopentenyl diphosphate binding site. 3 residues coordinate all-trans-hexaprenyl diphosphate: K198, T199, and Q236.

Belongs to the FPP/GGPP synthase family. Heterodimer of component I and II. The cofactor is Mg(2+).

It catalyses the reaction 4 isopentenyl diphosphate + (2E,6E)-farnesyl diphosphate = all-trans-heptaprenyl diphosphate + 4 diphosphate. Functionally, supplies heptaprenyl diphosphate, the precursor for the side chain of the isoprenoid quinone menaquinone-7 (MQ-7). This is Heptaprenyl diphosphate synthase component 2 (hepT) from Bacillus subtilis (strain 168).